We begin with the raw amino-acid sequence, 252 residues long: Vacuolar iron transporter 1 (252 aa).

Residues 1 to 38 (MAAATDGGGLPLLADKAASHSHHHHPERHFTSGEVVRD) lie on the Cytoplasmic side of the membrane. The helical transmembrane segment at 39 to 59 (VIMGVSDGLTVPFALAAGLSG) threads the bilayer. At 60 to 65 (ASAPSS) the chain is on the vacuolar side. The chain crosses the membrane as a helical span at residues 66-86 (LVLTAGLAEVAAGAISMGLGG). Topologically, residues 87–170 (YLAAKSEADH…PDPKRAIQSA (84 aa)) are cytoplasmic. The cytoplasmic metal binding domain (MBD) stretch occupies residues 92 to 167 (SEADHYQREM…LEKPDPKRAI (76 aa)). Residues Glu104, Glu107, Glu115, Glu118, Met151, and Glu155 each contribute to the Fe cation site. Residues 171–191 (LTIALSYVIGGLVPLLPYMFI) form a helical membrane-spanning segment. Topologically, residues 192-196 (STAQN) are vacuolar. A helical membrane pass occupies residues 197–217 (AMLTSVGVTLVALLFFGYIKG). Over 218 to 224 (RFTGNRP) the chain is Cytoplasmic. A helical membrane pass occupies residues 225 to 245 (FLSAVQTAIIGALASAAAYGM). The Vacuolar segment spans residues 246 to 252 (AKAVQTR).

Belongs to the CCC1 family. Homodimer. The dimeric interaction is mediated by both the transmembrane domains (TMDs) and the cytoplasmic metal binding domain (MBD). As to expression, highly expressed in leaf blades. Expressed in leaf sheaths.

It localises to the vacuole membrane. The catalysed reaction is Fe(2+)(in) = Fe(2+)(out). Its function is as follows. Vacuolar iron transporter involved in the transfer of iron ions from the cytosol to the vacuole for intracellular iron storage. Vacuolar iron storage is required for seed embryo and seedling development. May be involved in the regulation of iron translocation between flag leaves and seeds. Can transport zinc ions from the cytosol to the vacuole. This Oryza sativa subsp. japonica (Rice) protein is Vacuolar iron transporter 1.